We begin with the raw amino-acid sequence, 937 residues long: Inactive tyrosine-protein kinase transmembrane receptor ROR1 (937 aa).

The first 29 residues, 1–29, serve as a signal peptide directing secretion; it reads MHRPRRRGTRPPLLALLAALLLAARGAAA. The Extracellular segment spans residues 30–406; sequence QETELSVSAE…KEKNKMEILY (377 aa). Positions 42–147 constitute an Ig-like C2-type domain; it reads PTSSWNISSE…EVVSSTGVLF (106 aa). Asparagine 47 and asparagine 66 each carry an N-linked (GlcNAc...) asparagine glycan. Intrachain disulfides connect cysteine 79–cysteine 131, cysteine 170–cysteine 235, cysteine 178–cysteine 228, cysteine 219–cysteine 260, cysteine 248–cysteine 296, cysteine 252–cysteine 282, cysteine 313–cysteine 391, cysteine 334–cysteine 374, and cysteine 362–cysteine 386. An FZ domain is found at 165–299; the sequence is EEDGFCQPYR…SPEAANCIRI (135 aa). Residue asparagine 184 is glycosylated (N-linked (GlcNAc...) asparagine). Positions 312-391 constitute a Kringle domain; that stretch reads KCYNSTGVDY…KSDLCDIPAC (80 aa). An N-linked (GlcNAc...) asparagine glycan is attached at asparagine 315. The chain crosses the membrane as a helical span at residues 407–427; the sequence is ILVPSVAIPLAIALLFFFICV. Residues 428–937 are Cytoplasmic-facing; it reads CRNNQKSSSA…HTESMISAEL (510 aa). One can recognise a Protein kinase domain in the interval 473 to 746; sequence VRFMEELGEC…PRFKDIHVRL (274 aa). Residues 479–487 and lysine 506 each bind ATP; that span reads LGECAFGKI. At tyrosine 645 the chain carries Phosphotyrosine; by autocatalysis. The segment covering 753–762 has biased composition (low complexity); it reads SSHTSSTTPS. Disordered stretches follow at residues 753 to 779 and 833 to 890; these read SSHT…SPVS and AAHY…HMSI. The segment covering 763–779 has biased composition (polar residues); sequence GGNATTQTTSLSASPVS. Low complexity predominate over residues 854-864; it reads RSPSSASGSTS. A compositionally biased stretch (polar residues) spans 865–880; that stretch reads TGHVTSLPSSGSNQEA.

Belongs to the protein kinase superfamily. Tyr protein kinase family. ROR subfamily. Interacts with ERBB2 and IGFBP5. As to expression, expressed strongly in human heart, lung and kidney, but weakly in the CNS. Isoform Short is strongly expressed in fetal and adult CNS and in a variety of human cancers, including those originating from CNS or PNS neuroectoderm.

The protein localises to the membrane. It is found in the cell projection. It localises to the axon. Has very low kinase activity in vitro and is unlikely to function as a tyrosine kinase in vivo. Receptor for ligand WNT5A which activate downstream NFkB signaling pathway and may result in the inhibition of WNT3A-mediated signaling. In inner ear, crucial for spiral ganglion neurons to innervate auditory hair cells. Via IGFBP5 ligand, forms a complex with ERBB2 to enhance CREB oncogenic signaling. This chain is Inactive tyrosine-protein kinase transmembrane receptor ROR1 (ROR1), found in Homo sapiens (Human).